A 674-amino-acid polypeptide reads, in one-letter code: MGSNSSKISDLPKNEYLKRLSGPEAISENDPFWNQLFSFSFSAPTSSTELKLLEEATISVCKSLVENNPRTGNLAALTKVFLARTRELRLSAECQNHIFIWQTHNALFIICCLLKVFICEMSEEELQLHFTYEEKLPGTYTLCVLLGSDSEDLLEELLCSLIQLITDTPLLDITYEISVEAISAMIVFLSCQLFHKEVLRQSISHKYLMQGPCLPYTSKLVKTLLYNFIRQEKPPPPGTHVFPQQSDGGGLLYGLASGVATGLWTVFTLGGVGSKAASPELTSPLANQSLLLLLVLVNLTDAPDIPNPYRQAVTSFKNTQDSSPFPSSVPHTFQINFNSLYTTLCEQQTSDQATLLLYTLLHQNANVRTYMLARTDMENLVLPILEILYHVEERNSHHVYMALIILLILTEDDGFNRSIHEVILKNITWYSERVLTEISLGSLLILVVIRTIQYNMTRTRDKYLHTNCLAALANMSAQFRSLHQYAAQRIISLFSLLSKKHNKVLEQATQSLRGSLSSSDVPLPDYAQDLSVIEEVIRMMLEIINSCLTNSLHHNPNLVYALLYKRDLFEQFRTHPSFQDIMQNIDLVISFFSSRLLQSGAELSVERVLEIIKQGVVALPKDRLKKFPELKFKYVEEEQPEEFFIPYVWSLVYNSAVGLYWNPQDIQLFAMDSD.

Gly-2 is lipidated: N-myristoyl glycine.

This sequence belongs to the dymeclin family. In terms of assembly, interacts with GOLM1 and PPIB. Myristoylated in vitro; myristoylation is not essential for protein targeting to Golgi compartment.

The protein resides in the cytoplasm. The protein localises to the golgi apparatus. It localises to the membrane. In terms of biological role, necessary for correct organization of Golgi apparatus. Involved in bone development. The polypeptide is Dymeclin (Dym) (Rattus norvegicus (Rat)).